A 358-amino-acid chain; its full sequence is Biotin synthase (358 aa).

A Radical SAM core domain is found at 50–277; the sequence is NEVQVSTLCS…KSHVRLSAGR (228 aa). C65, C69, and C72 together coordinate [4Fe-4S] cluster. Residues C109, C140, C200, and R272 each contribute to the [2Fe-2S] cluster site.

The protein belongs to the radical SAM superfamily. Biotin synthase family. As to quaternary structure, homodimer. Requires [4Fe-4S] cluster as cofactor. [2Fe-2S] cluster is required as a cofactor.

It carries out the reaction (4R,5S)-dethiobiotin + (sulfur carrier)-SH + 2 reduced [2Fe-2S]-[ferredoxin] + 2 S-adenosyl-L-methionine = (sulfur carrier)-H + biotin + 2 5'-deoxyadenosine + 2 L-methionine + 2 oxidized [2Fe-2S]-[ferredoxin]. It participates in cofactor biosynthesis; biotin biosynthesis; biotin from 7,8-diaminononanoate: step 2/2. Its function is as follows. Catalyzes the conversion of dethiobiotin (DTB) to biotin by the insertion of a sulfur atom into dethiobiotin via a radical-based mechanism. The polypeptide is Biotin synthase (Cellvibrio japonicus (strain Ueda107) (Pseudomonas fluorescens subsp. cellulosa)).